We begin with the raw amino-acid sequence, 262 residues long: Polyamine aminopropyltransferase (262 aa).

The PABS domain occupies 1-249 (MWITQEITPY…DIHRAAFALP (249 aa)). Position 29 (N29) interacts with S-methyl-5'-thioadenosine. D83 is a spermidine binding site. Catalysis depends on D155, which acts as the Proton acceptor.

As to quaternary structure, homodimer.

The protein localises to the cytoplasm. It carries out the reaction S-adenosyl 3-(methylsulfanyl)propylamine + putrescine = S-methyl-5'-thioadenosine + spermidine + H(+). The protein operates within amine and polyamine biosynthesis; spermidine biosynthesis; spermidine from putrescine: step 1/1. Its activity is regulated as follows. Inhibited by methylglyoxal bis(cyclopentylamidinohydrazone)(MGBCP). In terms of biological role, involved in the cell growth and proliferation. Catalyzes the irreversible transfer of a propylamine group from the amino donor S-adenosylmethioninamine (decarboxy-AdoMet) to putrescine (1,4-diaminobutane) to yield spermidine. Spermidine cannot be used as an aminopropyl acceptor. The protein is Polyamine aminopropyltransferase of Helicobacter pylori (strain ATCC 700392 / 26695) (Campylobacter pylori).